The following is a 315-amino-acid chain: uncharacterized protein (315 aa).

Over 1 to 38 the chain is Cytoplasmic; sequence MDVLLSLPQPELFKTTVIPFLANRNIIKSEAILSNLHS. Residues 39–59 traverse the membrane as a helical segment; the sequence is IFYVAIFYHIWFLFGKWILFP. The Lumenal segment spans residues 60-101; the sequence is HLVKWKLDYDQKHNVKKDEKTTSERQAQHYKKKYTSLINQSS. The region spanning 95 to 302 is the TLC domain; sequence SLINQSSVHL…MVSVAAKVLK (208 aa). The chain crosses the membrane as a helical span at residues 102-122; sequence VHLISLLQSIVVLYYSLKFLL. Residues 123–144 are Cytoplasmic-facing; that stretch reads DPKASAEPYQTSHSRVFTENRD. A helical membrane pass occupies residues 145–165; that stretch reads TQVICIFAIGYFVWDIYISTM. The Lumenal portion of the chain corresponds to 166–170; the sequence is YSTFP. The chain crosses the membrane as a helical span at residues 171-190; it reads FVVHGIISTVVFCIGLKPYI. Topologically, residues 191–225 are cytoplasmic; the sequence is QYYAPVFLMFELSNPSLNFRWFGIKFLPQKSKFCS. A helical membrane pass occupies residues 226–246; sequence LLLLLNNLTLMVVFFAARIAW. At 247-264 the chain is on the lumenal side; the sequence is GWFQIGKLCYDFYQVRNE. The helical transmembrane segment at 265 to 285 threads the bilayer; it reads PGFLVFDTIVILAGNFVLDIL. At 286 to 315 the chain is on the cytoplasmic side; that stretch reads NVIWFSTMVSVAAKVLKKGESVDKVTKNEQ.

The protein localises to the endoplasmic reticulum membrane. This is an uncharacterized protein from Saccharomyces cerevisiae (strain ATCC 204508 / S288c) (Baker's yeast).